A 240-amino-acid polypeptide reads, in one-letter code: UDP-2,3-diacylglucosamine hydrolase (240 aa).

The Mn(2+) site is built by Asp-8, His-10, Asp-41, Asn-79, and His-114. 79 to 80 contributes to the substrate binding site; that stretch reads NR. 5 residues coordinate substrate: Asp-122, Ser-160, Asn-164, Lys-167, and His-195. Residues His-195 and His-197 each contribute to the Mn(2+) site.

This sequence belongs to the LpxH family. Mn(2+) serves as cofactor.

The protein localises to the cell inner membrane. The enzyme catalyses UDP-2-N,3-O-bis[(3R)-3-hydroxytetradecanoyl]-alpha-D-glucosamine + H2O = 2-N,3-O-bis[(3R)-3-hydroxytetradecanoyl]-alpha-D-glucosaminyl 1-phosphate + UMP + 2 H(+). It functions in the pathway glycolipid biosynthesis; lipid IV(A) biosynthesis; lipid IV(A) from (3R)-3-hydroxytetradecanoyl-[acyl-carrier-protein] and UDP-N-acetyl-alpha-D-glucosamine: step 4/6. Its function is as follows. Hydrolyzes the pyrophosphate bond of UDP-2,3-diacylglucosamine to yield 2,3-diacylglucosamine 1-phosphate (lipid X) and UMP by catalyzing the attack of water at the alpha-P atom. Involved in the biosynthesis of lipid A, a phosphorylated glycolipid that anchors the lipopolysaccharide to the outer membrane of the cell. This is UDP-2,3-diacylglucosamine hydrolase from Yersinia pseudotuberculosis serotype O:1b (strain IP 31758).